The sequence spans 177 residues: Large ribosomal subunit protein uL6 (177 aa).

It belongs to the universal ribosomal protein uL6 family. Part of the 50S ribosomal subunit.

In terms of biological role, this protein binds to the 23S rRNA, and is important in its secondary structure. It is located near the subunit interface in the base of the L7/L12 stalk, and near the tRNA binding site of the peptidyltransferase center. This Natronomonas pharaonis (strain ATCC 35678 / DSM 2160 / CIP 103997 / JCM 8858 / NBRC 14720 / NCIMB 2260 / Gabara) (Halobacterium pharaonis) protein is Large ribosomal subunit protein uL6.